A 61-amino-acid polypeptide reads, in one-letter code: MDPNCSCSTGSSCSCAGSCTCKACRCPSCKKSCCSCCPVGCAKCAQGCICKGASDKCSCCA.

Residues 1–29 (MDPNCSCSTGSSCSCAGSCTCKACRCPSC) form a beta region. Cys5, Cys7, Cys13, Cys15, Cys19, Cys21, Cys24, Cys26, Cys29, Cys33, Cys34, Cys36, Cys37, Cys41, Cys44, Cys48, Cys50, Cys57, Cys59, and Cys60 together coordinate a divalent metal cation. Residues 30-61 (KKSCCSCCPVGCAKCAQGCICKGASDKCSCCA) are alpha.

The protein belongs to the metallothionein superfamily. Type 1 family.

Its function is as follows. Metallothioneins have a high content of cysteine residues that bind various heavy metals; these proteins are transcriptionally regulated by both heavy metals and glucocorticoids. This chain is Metallothionein-1C (MT1C), found in Ovis aries (Sheep).